Consider the following 452-residue polypeptide: Plasmepsin I (452 aa).

At 1 to 37 (MALSIKEDFSSAFAKNESAVNSSTFNNNMKTWKIQKR) the chain is on the cytoplasmic side. The propeptide occupies 1–123 (MALSIKEDFS…TGLTQKPHLG (123 aa)). Residues 38–58 (FQILYVFFFLLITGALFYYLI) form a helical; Signal-anchor for type II membrane protein membrane-spanning segment. The Lumenal segment spans residues 59 to 452 (DNVLFPKNKK…VGFALAKKKL (394 aa)). The Peptidase A1 domain maps to 139 to 446 (YYGEAQIGDN…DYDNHTVGFA (308 aa)). Aspartate 157 is an active-site residue. The cysteines at positions 170 and 175 are disulfide-linked. The active site involves aspartate 337. Residues cysteine 372 and cysteine 408 are joined by a disulfide bond.

It belongs to the peptidase A1 family. In terms of processing, not N-glycosylated. Proteolytically cleaved into the soluble active mature form in the digestive vacuole by cysteine protease falcipains; the process begins at the early ring stage. Proteolysis requires an acidic environment.

It localises to the membrane. It is found in the vacuole lumen. The protein resides in the vacuole membrane. It catalyses the reaction Hydrolysis of the 33-Phe-|-Leu-34 bond in the alpha-chain of hemoglobin, leading to denaturation of molecule.. With respect to regulation, inhibited by KNI derived compounds KNI-10333 and to a lesser extent KNI-10743. Functionally, during the asexual blood stage, catalyzes the initial cleavage of native host hemoglobin (Hb) resulting in Hb denaturation; specifically cleaves between Phe-33 and Leu-34 of Hb alpha-chain. Digestion of host Hb is an essential step which provides the parasite with amino acids for protein synthesis, and regulates osmolarity. The protein is Plasmepsin I of Plasmodium falciparum (isolate 3D7).